The primary structure comprises 62 residues: MTIAFQLAVFALIATSFLLVIGVPVVLASPDGWSSSKNAVFSGASLWIGLVFLVGILNSFIS.

Transmembrane regions (helical) follow at residues 8–28 and 41–61; these read AVFA…VVLA and FSGA…NSFI.

The protein belongs to the PsbZ family. PSII is composed of 1 copy each of membrane proteins PsbA, PsbB, PsbC, PsbD, PsbE, PsbF, PsbH, PsbI, PsbJ, PsbK, PsbL, PsbM, PsbT, PsbY, PsbZ, Psb30/Ycf12, at least 3 peripheral proteins of the oxygen-evolving complex and a large number of cofactors. It forms dimeric complexes.

It localises to the plastid. The protein resides in the chloroplast thylakoid membrane. Functionally, may control the interaction of photosystem II (PSII) cores with the light-harvesting antenna, regulates electron flow through the 2 photosystem reaction centers. PSII is a light-driven water plastoquinone oxidoreductase, using light energy to abstract electrons from H(2)O, generating a proton gradient subsequently used for ATP formation. The polypeptide is Photosystem II reaction center protein Z (Anthoceros angustus (Hornwort)).